Consider the following 46-residue polypeptide: DNA-directed RNA polymerases I, II, and III subunit rpabc4 (46 aa).

The Zn(2+) site is built by Cys7, Cys10, Cys24, and Cys27. The C4-type zinc finger occupies 7-27 (CGECGAEHEIKPKEPVKCKDC).

Belongs to the archaeal Rpo12/eukaryotic RPC10 RNA polymerase subunit family. As to quaternary structure, component of the RNA polymerase I (Pol I), RNA polymerase II (Pol II) and RNA polymerase III (Pol III) complexes consisting of at least 13, 12 and 17 subunits, respectively.

It localises to the nucleus. Its function is as follows. DNA-dependent RNA polymerase catalyzes the transcription of DNA into RNA using the four ribonucleoside triphosphates as substrates. Common component of RNA polymerases I, II and III which synthesize ribosomal RNA precursors, mRNA precursors and many functional non-coding RNAs, and a small RNAs, such as 5S rRNA and tRNAs, respectively. The protein is DNA-directed RNA polymerases I, II, and III subunit rpabc4 (polr2k) of Dictyostelium discoideum (Social amoeba).